Consider the following 471-residue polypeptide: Putative multidrug resistance protein MdtD (471 aa).

13 helical membrane passes run 12–32, 49–69, 77–97, 106–126, 138–158, 165–185, 197–217, 225–245, 263–285, 290–312, 342–362, 396–416, and 431–451; these read LWIV…VNTA, MVIV…GWLA, IFFT…QSST, VLQG…VMKI, FVTL…GLLV, WIFL…LWLM, FSGF…LDGY, AGLG…LWHA, FSLG…FMTP, IGLG…GSMG, LLFM…VMLF, MVMQ…LGAF, and IFFW…LVFA.

This sequence belongs to the major facilitator superfamily. TCR/Tet family.

Its subcellular location is the cell inner membrane. This is Putative multidrug resistance protein MdtD from Cronobacter sakazakii (strain ATCC BAA-894) (Enterobacter sakazakii).